Here is a 612-residue protein sequence, read N- to C-terminus: Protein hinderin (612 aa).

Ser-20 is subject to Phosphoserine. Positions 90–166 form a coiled coil; it reads LKDLCLEDKR…CQELLSLYQK (77 aa). Ser-178 carries the post-translational modification Phosphoserine. The stretch at 362 to 406 forms a coiled coil; the sequence is IEKQLSEDRRQQLMLQKMELEIEKERLQHLLAQQETKLLLKQQQL. The segment covering 462–477 has biased composition (polar residues); sequence STSFKKCPDSPNSGQN. Disordered stretches follow at residues 462–484 and 509–598; these read STSF…KKTV and ETVT…RSPE. A phosphoserine mark is found at Ser-471, Ser-527, and Ser-558. Composition is skewed to polar residues over residues 555 to 568 and 575 to 585; these read QSLS…SQPH and TWSTLRPTPQK.

As to quaternary structure, interacts (via N- and C-terminal domains) with SMC3 (via central hinge region).

In terms of biological role, competes with SMC1 for binding to SMC3. May affect the availability of SMC3 to engage in the formation of multimeric protein complexes. This chain is Protein hinderin (Kiaa1328), found in Mus musculus (Mouse).